A 399-amino-acid polypeptide reads, in one-letter code: MDNCVNSFEDQKDDLVHKKKSQNFGYVCGSINLGTNVIAQSPTKPLNFFHSSRWSPDGSTILSLTEDQCLNCWNVPFSDLSKKADGPLNFSKHLSYKYQSPETVYSYSWYSRMKLDDPSSNLFAVSSRDQPIKLINFTTGKNKASYHMIDHQERYQGSHCLQFTNDGEYLIAGDKNCLHHFNIRTGCKEPVMTTVTHGYKVPLWEFSLKGIQSCFSLNPMDSKTLAVGTYSNRVGIYNDCGRRPCQLEFSIERGNGVTHLQWCEDGEKLYVGSRCSDKIEVWDIRYVRDMVYALEGHRGDTNQRILFDTDKKDEILAGGTDGSIRRWRNKDLVEETHVTGNYDLTVNTVQANPINMQIKCVCYGNRIYKYEKDESEEEDESKEKDLWTGTVSALQVWMD.

6 WD repeats span residues 44 to 83 (KPLN…LSKK), 105 to 145 (YSYS…NKAS), 150 to 194 (DHQE…VMTT), 207 to 247 (SLKG…PCQL), 252 to 292 (ERGN…DMVY), and 296 to 337 (GHRG…EETH).

Interacts with gpa1.

The protein resides in the cytoplasm. In terms of biological role, negatively regulates the pheromone-response pathway. Acts as a structural mimic of the G protein beta subunit thereby interacting with gpa1 which then inhibits gpa1 signaling. The chain is Guanine nucleotide-binding protein negative regulator 1 (gnr1) from Schizosaccharomyces pombe (strain 972 / ATCC 24843) (Fission yeast).